The sequence spans 999 residues: Ulvan lyase, long isoform (999 aa).

A signal peptide spans 1 to 21 (MKCLKTLLVSTTLLTAFSLNA). 126–127 (SH) serves as a coordination point for substrate. Catalysis depends on histidine 127, which acts as the Proton donor/acceptor. Aspartate 189, aspartate 199, and lysine 201 together coordinate Ca(2+). The substrate site is built by tyrosine 280 and arginine 297. 3 residues coordinate Ca(2+): aspartate 300, aspartate 303, and tyrosine 305. Substrate is bound at residue tyrosine 361.

This sequence belongs to the polysaccharide lyase 24 family.

Functionally, ulvan lyase involved in ulvan degradation. Ulvan is the main polysaccharide component of the Ulvales (green seaweed) cell wall. It is composed of disaccharide building blocks comprising 3-sulfated rhamnose (Rha3S) linked to D-glucuronic acid (GlcA), L-iduronic acid (IduA), or D-xylose (Xyl). Ulvan lyase catalyzes preferentially the endolytic cleavage of the glycosidic bond between Rha3S and the uronic acid GlcA, but not IduA, producing oligosaccharides that have unsaturated 4-deoxy-L-threo-hex-4-enopyranosiduronic acid (deltaUA) at the non-reducing end. The most abundant end products in the degradation of the ulvan polysaccharide were deltaUA-Rha3S disaccharides and deltaUA-Rha3S-IduA-Rha3S and deltaUA-Rha3S-Xyl-Rha3S tetrasaccharides. The protein is Ulvan lyase, long isoform of Alteromonas sp. (strain LOR).